A 983-amino-acid polypeptide reads, in one-letter code: Kinesin-like protein KIN-14I (983 aa).

The region spanning 44–166 is the Calponin-homology (CH) domain; sequence ASRRYEAANW…CVLAIKSYDE (123 aa). Composition is skewed to polar residues over residues 203–214 and 278–287; these read SLSRTSSINNEK and ESTSSQNNRS. Disordered regions lie at residues 203-227 and 276-295; these read SLSRTSSINNEKAPSENDSNKLSSP and PRESTSSQNNRSFLKPLGER. The region spanning 399 to 724 is the Kinesin motor domain; the sequence is SIRVYCRVRP…LKFAERVATV (326 aa). 481–488 serves as a coordination point for ATP; that stretch reads GQTGSGKT. Residues 731-758 adopt a coiled-coil conformation; the sequence is VNNDTSDVKELKEQIATLKAALARKEAE. 2 disordered regions span residues 802 to 824 and 921 to 983; these read TVNSPPWPPVASPGQAYREDDRS and TRSN…NARH. Positions 939-951 are enriched in polar residues; sequence SPQSRNNSNNTVS.

The protein belongs to the TRAFAC class myosin-kinesin ATPase superfamily. Kinesin family. KIN-14 subfamily.

In Arabidopsis thaliana (Mouse-ear cress), this protein is Kinesin-like protein KIN-14I.